The sequence spans 1013 residues: Poly [ADP-ribose] polymerase 1 (1013 aa).

PARP-type zinc fingers lie at residues 10–92 (YKAE…ESGG) and 113–203 (FAVE…PAVK). The Zn(2+) site is built by cysteine 22, cysteine 25, histidine 54, cysteine 57, cysteine 125, cysteine 128, histidine 159, and cysteine 162. Positions 202 to 228 (VKSEGKRKADEVDGGVSKKQKKEDEKL) are disordered. The Nuclear localization signal motif lies at 207–209 (KRK). Residues 219–353 (KKQKKEDEKL…FKRQDRVFPK (135 aa)) form the PADR1 zinc-binding domain. Positions 284-326 (GSLKPCETCKGQLVFKSDAYYCTGDISAWTKCVFKTQTPDRKD) are zinc ribbon. Residues cysteine 289, cysteine 292, cysteine 305, and cysteine 315 each contribute to the Zn(2+) site. The interval 353–385 (KDAPPAAATPSSGSTTSAATSVSSASKNLTEAP) is disordered. Over residues 356-378 (PPAAATPSSGSTTSAATSVSSAS) the composition is skewed to low complexity. The automodification domain stretch occupies residues 365–523 (GSTTSAATSV…EGGSKSKKMK (159 aa)). Residues 385–461 (PADKPLTGMK…RVVADDFLTD (77 aa)) enclose the BRCT domain. Glutamate 413, glutamate 435, glutamate 444, glutamate 445, glutamate 464, glutamate 471, glutamate 484, and glutamate 488 each carry polyADP-ribosyl glutamic acid. Low complexity predominate over residues 494–507 (AATKSTGAHSSKST). A disordered region spans residues 494–522 (AATKSTGAHSSKSTGKVKEEEGGSKSKKM). PolyADP-ribosyl glutamic acid occurs at positions 512 and 513. The WGR domain maps to 541–637 (CAHVLEQNGK…SNFTKYPNKF (97 aa)). Residues 661-778 (KSQLEKPVQD…DIEVAYSLLR (118 aa)) form the PARP alpha-helical domain. The 227-residue stretch at 787 to 1013 (DPIDINYEKL…IRFNYQTSLW (227 aa)) folds into the PARP catalytic domain. NAD(+) is bound by residues 861–863 (HGS), glycine 870, arginine 877, and serine 903. The active-site For poly [ADP-ribose] polymerase activity is glutamate 987.

Belongs to the ARTD/PARP family. Homodimer; PARP-type zinc-fingers from separate parp1 molecules form a dimer module that specifically recognizes DNA strand breaks. Poly-ADP-ribosylated on serine, glutamate and aspartate residues by autocatalysis. Auto-ADP-ribosylation on serine takes place following interaction with HPF1. Auto poly-ADP-ribosylation on serine residues promotes its dissociation from chromatin.

Its subcellular location is the chromosome. It is found in the nucleus. It localises to the nucleolus. The protein resides in the cytoplasm. The protein localises to the cytosol. It catalyses the reaction NAD(+) + (ADP-D-ribosyl)n-acceptor = nicotinamide + (ADP-D-ribosyl)n+1-acceptor + H(+).. It carries out the reaction L-seryl-[protein] + NAD(+) = O-(ADP-D-ribosyl)-L-seryl-[protein] + nicotinamide + H(+). The catalysed reaction is L-aspartyl-[protein] + NAD(+) = 4-O-(ADP-D-ribosyl)-L-aspartyl-[protein] + nicotinamide. The enzyme catalyses L-glutamyl-[protein] + NAD(+) = 5-O-(ADP-D-ribosyl)-L-glutamyl-[protein] + nicotinamide. It catalyses the reaction L-tyrosyl-[protein] + NAD(+) = O-(ADP-D-ribosyl)-L-tyrosyl-[protein] + nicotinamide + H(+). It carries out the reaction L-histidyl-[protein] + NAD(+) = N(tele)-(ADP-D-ribosyl)-L-histidyl-[protein] + nicotinamide + H(+). ADP-ribosyltransferase activity is regulated via an allosteric activation mechanism. In absence of activation signal, parp1 is autoinhibited by the PARP alpha-helical domain (also named HD region), which prevents effective NAD(+)-binding. Activity is highly stimulated by signals, such as DNA strand breaks. Binding to damaged DNA unfolds the PARP alpha-helical domain, relieving autoinhibition. Poly-ADP-ribosyltransferase activity is tightly regulated and parp1 is removed from damaged chromatin following initial poly-ADP-ribosylation of chromatin to avoid prolonged residence (trapping) that has cytotoxic consequences. A number of factors or post-translational modifications (auto-poly-ADP-ribosylation) promote parp1 removal from chromatin. Poly-ADP-ribosyltransferase that mediates poly-ADP-ribosylation of proteins and plays a key role in DNA repair. Mediates glutamate, aspartate, serine, histidine or tyrosine ADP-ribosylation of proteins: the ADP-D-ribosyl group of NAD(+) is transferred to the acceptor carboxyl group of target residues and further ADP-ribosyl groups are transferred to the 2'-position of the terminal adenosine moiety, building up a polymer with an average chain length of 20-30 units. Serine ADP-ribosylation of proteins constitutes the primary form of ADP-ribosylation of proteins in response to DNA damage. Specificity for the different amino acids is conferred by interacting factors, such as hpf1 and nmnat1. Following interaction with hpf1, catalyzes serine ADP-ribosylation of target proteins; hpf1 confers serine specificity by completing the parp1 active site. Also catalyzes tyrosine ADP-ribosylation of target proteins following interaction with hpf1. Following interaction with nmnat1, catalyzes glutamate and aspartate ADP-ribosylation of target proteins; nmnat1 confers glutamate and aspartate specificity. Parp1 initiates the repair of DNA breaks: recognizes and binds DNA breaks within chromatin and recruits hpf1, licensing serine ADP-ribosylation of target proteins, such as histones (H2BS6ADPr and H3S10ADPr), thereby promoting decompaction of chromatin and the recruitment of repair factors leading to the reparation of DNA strand breaks. In addition to base excision repair (BER) pathway, also involved in double-strand breaks (DSBs) repair. Mediates the poly-ADP-ribosylation of a number of proteins. In addition to proteins, also able to ADP-ribosylate DNA: catalyzes ADP-ribosylation of DNA strand break termini containing terminal phosphates and a 2'-OH group in single- and double-stranded DNA, respectively. Parp1-mediated DNA repair in neurons plays a role in sleep: senses DNA damage in neurons and promotes sleep, facilitating efficient DNA repair. In addition to DNA repair, also involved in other processes, such as transcription regulation, programmed cell death, membrane repair, adipogenesis and innate immunity. Acts as a repressor of transcription: binds to nucleosomes and modulates chromatin structure in a manner similar to histone H1, thereby altering RNA polymerase II. Acts both as a positive and negative regulator of transcription elongation, depending on the context. Poly-ADP-ribose chains generated by parp1 also play a role in poly-ADP-ribose-dependent cell death, a process named parthanatos. Also acts as a negative regulator of the cGAS-STING pathway by mediating poly-ADP-ribosylation and inactivation of cgas. Acts as a negative regulator of adipogenesis by catalyzing poly ADP-ribosylation of histone H2B on 'Glu-35' (H2BE35ADPr). This Danio rerio (Zebrafish) protein is Poly [ADP-ribose] polymerase 1.